The chain runs to 437 residues: Doublesex- and mab-3-related transcription factor A2 (437 aa).

The DM DNA-binding region spans 49-96; sequence CARCRNHGVVSALKGHKRYCRWKDCMCAKCTLIAERQRVMAAQVALRR. The disordered stretch occupies residues 160-253; it reads IPRSMTPQLP…DPSSSSLARQ (94 aa). 2 stretches are compositionally biased toward low complexity: residues 179-201 and 223-235; these read SEPVSGSAPGASSPEAQPGSGSE and SPSLISPLSSESG. A DMA domain is found at 254–289; that stretch reads RTPINILTRVFPAQKRSVLELVLQGCGGDVVQAIEQ.

Belongs to the DMRT family.

Its subcellular location is the nucleus. May be involved in sexual development. This Xenopus laevis (African clawed frog) protein is Doublesex- and mab-3-related transcription factor A2 (dmrta2).